The sequence spans 484 residues: MTEKLIFELGSPGRQGVLFPANDVPEIPPHELLPRDLIREQEVPLPEVSEGDAVRHFVRLSRMNFGVDVGFYPLGSCTMKYNPKVAEDAAGLSGFANIHPYQPDEISQGALQLMYETQQDLAEITGMDAFTLQPAAGAQGELTGMLIIKAYLESKGETGRNKVIVPDSAHGTNPATAALCGFKVVEVKSDQRGGVDLAALKQLLGPDVAALMLTNPSTLGLFEDNITEIAALVHQAGGLLYYDGANLNAIMGYARPGDMGFDVVHLNLHKTFGTPHGGGGPGSGPVGVKAELAPFLPKPVIIQREGNYLPDYHRPQSIGRVKAFFANFSVIVKAYTYLRSLGGKGLKEVSEHAVLNANYLMKQLSDHFRVPYQRTCMHEFVVSPPEDMKEQGIKTLDIAKRLLDYGYHPPTVYFPLIVEEALMFEPTETESKETLDEFAHNLIKVLAEARENPDKLRNAPYTTPIRRLDEVMAARKPLVGWFPE.

K270 is modified (N6-(pyridoxal phosphate)lysine).

This sequence belongs to the GcvP family. C-terminal subunit subfamily. In terms of assembly, the glycine cleavage system is composed of four proteins: P, T, L and H. In this organism, the P 'protein' is a heterodimer of two subunits. Requires pyridoxal 5'-phosphate as cofactor.

It catalyses the reaction N(6)-[(R)-lipoyl]-L-lysyl-[glycine-cleavage complex H protein] + glycine + H(+) = N(6)-[(R)-S(8)-aminomethyldihydrolipoyl]-L-lysyl-[glycine-cleavage complex H protein] + CO2. Functionally, the glycine cleavage system catalyzes the degradation of glycine. The P protein binds the alpha-amino group of glycine through its pyridoxal phosphate cofactor; CO(2) is released and the remaining methylamine moiety is then transferred to the lipoamide cofactor of the H protein. This chain is Probable glycine dehydrogenase (decarboxylating) subunit 2, found in Desulforamulus reducens (strain ATCC BAA-1160 / DSM 100696 / MI-1) (Desulfotomaculum reducens).